The primary structure comprises 208 residues: Sodium/potassium-transporting ATPase subunit beta-1-interacting protein 2 (208 aa).

4 helical membrane passes run 1 to 23 (MGYCSGRCTLIFICGMQLVCVLE), 35 to 55 (APILANFVHIIIVILGLFGTI), 62 to 82 (ITGYAVWLVLWVTWNVFVICF), and 153 to 173 (LQIVLALAGFIYACYVVKCIT).

It belongs to the NKAIN family. Interacts with ATP1B1. Expressed in fetal brain. Weakly expressed in adult brain and thymus. Not expressed in any other normal tissue examined.

The protein localises to the cell membrane. In Homo sapiens (Human), this protein is Sodium/potassium-transporting ATPase subunit beta-1-interacting protein 2 (NKAIN2).